Reading from the N-terminus, the 448-residue chain is tRNA-2-methylthio-N(6)-dimethylallyladenosine synthase (448 aa).

The MTTase N-terminal domain maps to 3 to 119 (GRVYVKTHGC…LPEMIDRARD (117 aa)). 6 residues coordinate [4Fe-4S] cluster: Cys12, Cys49, Cys82, Cys156, Cys160, and Cys163. Residues 142 to 374 (RAEGPTAFVS…QETINANARR (233 aa)) enclose the Radical SAM core domain. One can recognise a TRAM domain in the interval 377-440 (ESMVGTVQRV…PNSLRGELLG (64 aa)).

Belongs to the methylthiotransferase family. MiaB subfamily. Monomer. The cofactor is [4Fe-4S] cluster.

The protein resides in the cytoplasm. The catalysed reaction is N(6)-dimethylallyladenosine(37) in tRNA + (sulfur carrier)-SH + AH2 + 2 S-adenosyl-L-methionine = 2-methylsulfanyl-N(6)-dimethylallyladenosine(37) in tRNA + (sulfur carrier)-H + 5'-deoxyadenosine + L-methionine + A + S-adenosyl-L-homocysteine + 2 H(+). In terms of biological role, catalyzes the methylthiolation of N6-(dimethylallyl)adenosine (i(6)A), leading to the formation of 2-methylthio-N6-(dimethylallyl)adenosine (ms(2)i(6)A) at position 37 in tRNAs that read codons beginning with uridine. This chain is tRNA-2-methylthio-N(6)-dimethylallyladenosine synthase, found in Alkalilimnicola ehrlichii (strain ATCC BAA-1101 / DSM 17681 / MLHE-1).